The primary structure comprises 177 residues: Peptide methionine sulfoxide reductase MsrA (177 aa).

Cys-10 is a catalytic residue.

Belongs to the MsrA Met sulfoxide reductase family.

The catalysed reaction is L-methionyl-[protein] + [thioredoxin]-disulfide + H2O = L-methionyl-(S)-S-oxide-[protein] + [thioredoxin]-dithiol. It catalyses the reaction [thioredoxin]-disulfide + L-methionine + H2O = L-methionine (S)-S-oxide + [thioredoxin]-dithiol. Functionally, has an important function as a repair enzyme for proteins that have been inactivated by oxidation. Catalyzes the reversible oxidation-reduction of methionine sulfoxide in proteins to methionine. The sequence is that of Peptide methionine sulfoxide reductase MsrA from Saccharolobus solfataricus (strain ATCC 35092 / DSM 1617 / JCM 11322 / P2) (Sulfolobus solfataricus).